The sequence spans 305 residues: tRNA dimethylallyltransferase (305 aa).

14-21 (GPTASGKS) provides a ligand contact to ATP. 16–21 (TASGKS) contributes to the substrate binding site. The tract at residues 39-42 (DSMQ) is interaction with substrate tRNA.

Belongs to the IPP transferase family. Monomer. Mg(2+) serves as cofactor.

The enzyme catalyses adenosine(37) in tRNA + dimethylallyl diphosphate = N(6)-dimethylallyladenosine(37) in tRNA + diphosphate. Its function is as follows. Catalyzes the transfer of a dimethylallyl group onto the adenine at position 37 in tRNAs that read codons beginning with uridine, leading to the formation of N6-(dimethylallyl)adenosine (i(6)A). This Bradyrhizobium sp. (strain BTAi1 / ATCC BAA-1182) protein is tRNA dimethylallyltransferase.